The primary structure comprises 500 residues: NAD(P)H-quinone oxidoreductase chain 4, chloroplastic (500 aa).

14 consecutive transmembrane segments (helical) span residues Phe4–Leu24, Tyr35–Phe55, Ile87–Val107, Phe113–Ser130, Leu134–Met154, Phe167–Leu187, Ile211–His231, His242–Val262, Ala272–Ala292, Ile305–Asp325, Gly330–Gly350, Leu386–Thr406, Ile416–Met436, and Leu462–Val482.

Belongs to the complex I subunit 4 family.

Its subcellular location is the plastid. The protein localises to the chloroplast thylakoid membrane. The catalysed reaction is a plastoquinone + NADH + (n+1) H(+)(in) = a plastoquinol + NAD(+) + n H(+)(out). It carries out the reaction a plastoquinone + NADPH + (n+1) H(+)(in) = a plastoquinol + NADP(+) + n H(+)(out). The protein is NAD(P)H-quinone oxidoreductase chain 4, chloroplastic of Arabis hirsuta (Hairy rock-cress).